Reading from the N-terminus, the 312-residue chain is Mas-related G-protein coupled receptor member E (312 aa).

At 1-20 (MMEPREAGQHVGAANGAQED) the chain is on the extracellular side. The helical transmembrane segment at 21-41 (VAFNLIILSLTEGLGLGGLLG) threads the bilayer. Topologically, residues 42–59 (NGAVLWLLSSNVYRNPFA) are cytoplasmic. Residues 60 to 80 (IYLLDVACADLIFLGCHMVAI) traverse the membrane as a helical segment. Over 81-106 (VPDLLQGRLDFPGFVQTSLATLRFFC) the chain is Extracellular. Residues 107-127 (YIVGLSLLAAVSVEQCLAALF) form a helical membrane-spanning segment. The Cytoplasmic segment spans residues 128–141 (PAWYSCRRPRHLTT). The chain crosses the membrane as a helical span at residues 142 to 162 (CVCALTWALCLLLHLLLSGAC). At 163–176 (TQFFGEPSRHLCRT) the chain is on the extracellular side. A helical transmembrane segment spans residues 177-197 (LWLVAAVLLALLCCTMCGASL). The Cytoplasmic segment spans residues 198–217 (MLLLRVERGPQRPPPRGFPG). Residues 218–238 (LILLTVLLFLFCGLPFGIYWL) form a helical membrane-spanning segment. Topologically, residues 239-241 (SRN) are extracellular. The chain crosses the membrane as a helical span at residues 242 to 262 (LLWYIPHYFYHFSFLMAAVHC). The Cytoplasmic portion of the chain corresponds to 263-312 (AAKPVVYFCLGSAQGRRLPLRLVLQRALGDEAELGAVRETSRRGLVDIAA).

Belongs to the G-protein coupled receptor 1 family. Mas subfamily.

The protein resides in the cell membrane. Functionally, orphan receptor. May regulate nociceptor function and/or development, including the sensation or modulation of pain. The polypeptide is Mas-related G-protein coupled receptor member E (MRGPRE) (Homo sapiens (Human)).